A 356-amino-acid chain; its full sequence is NADH-quinone oxidoreductase subunit H (356 aa).

8 helical membrane-spanning segments follow: residues 18–38, 87–107, 120–140, 166–186, 205–225, 265–285, 292–312, and 333–353; these read IVMIAQSVLLLVVLLVAIAYI, GVFLLAPLVSCVLALAAWAVI, VGILFIFAISSLSIYGIIMAG, IGFVIITVLLCAGTLNLSAVV, ILNWYVWPLFPMFVVFYVSAL, AITTMCALATILFLGGWLPPI, WVPGVIWFALKLFFMFFLIAM, and FLPLSLVMVVIVAGVLHFAGI.

Belongs to the complex I subunit 1 family. NDH-1 is composed of 14 different subunits. Subunits NuoA, H, J, K, L, M, N constitute the membrane sector of the complex.

It localises to the cell inner membrane. The catalysed reaction is a quinone + NADH + 5 H(+)(in) = a quinol + NAD(+) + 4 H(+)(out). Its function is as follows. NDH-1 shuttles electrons from NADH, via FMN and iron-sulfur (Fe-S) centers, to quinones in the respiratory chain. The immediate electron acceptor for the enzyme in this species is believed to be ubiquinone. Couples the redox reaction to proton translocation (for every two electrons transferred, four hydrogen ions are translocated across the cytoplasmic membrane), and thus conserves the redox energy in a proton gradient. This subunit may bind ubiquinone. In Bradyrhizobium sp. (strain BTAi1 / ATCC BAA-1182), this protein is NADH-quinone oxidoreductase subunit H.